A 120-amino-acid polypeptide reads, in one-letter code: Large ribosomal subunit protein eL8 (120 aa).

The protein belongs to the eukaryotic ribosomal protein eL8 family. In terms of assembly, part of the 50S ribosomal subunit. Probably part of the RNase P complex.

The protein localises to the cytoplasm. Multifunctional RNA-binding protein that recognizes the K-turn motif in ribosomal RNA, the RNA component of RNase P, box H/ACA, box C/D and box C'/D' sRNAs. This is Large ribosomal subunit protein eL8 from Halobacterium salinarum (strain ATCC 29341 / DSM 671 / R1).